The following is a 464-amino-acid chain: Glycine--tRNA ligase (464 aa).

2 residues coordinate substrate: Arg104 and Glu175. Residues 207-209 (RNE), 217-222 (FRTREF), 292-293 (EL), and 336-339 (GVNR) contribute to the ATP site. Position 222–226 (222–226 (FEQME)) interacts with substrate. 332–336 (EPALG) contacts substrate.

The protein belongs to the class-II aminoacyl-tRNA synthetase family. Homodimer.

The protein resides in the cytoplasm. The catalysed reaction is tRNA(Gly) + glycine + ATP = glycyl-tRNA(Gly) + AMP + diphosphate. Its function is as follows. Catalyzes the attachment of glycine to tRNA(Gly). This is Glycine--tRNA ligase from Leptospira borgpetersenii serovar Hardjo-bovis (strain JB197).